Reading from the N-terminus, the 488-residue chain is Ribulose bisphosphate carboxylase large chain (488 aa).

Residues Asn127 and Thr177 each coordinate substrate. Lys179 (proton acceptor) is an active-site residue. A substrate-binding site is contributed by Lys181. Residues Lys205, Asp207, and Glu208 each contribute to the Mg(2+) site. An N6-carboxylysine modification is found at Lys205. The Proton acceptor role is filled by His297. Residues Arg298, His330, and Ser382 each coordinate substrate.

It belongs to the RuBisCO large chain family. Type I subfamily. Heterohexadecamer of 8 large chains and 8 small chains. The cofactor is Mg(2+).

Its subcellular location is the plastid. It is found in the chloroplast. The enzyme catalyses 2 (2R)-3-phosphoglycerate + 2 H(+) = D-ribulose 1,5-bisphosphate + CO2 + H2O. It catalyses the reaction D-ribulose 1,5-bisphosphate + O2 = 2-phosphoglycolate + (2R)-3-phosphoglycerate + 2 H(+). In terms of biological role, ruBisCO catalyzes two reactions: the carboxylation of D-ribulose 1,5-bisphosphate, the primary event in carbon dioxide fixation, as well as the oxidative fragmentation of the pentose substrate in the photorespiration process. Both reactions occur simultaneously and in competition at the same active site. The chain is Ribulose bisphosphate carboxylase large chain from Porphyra purpurea (Red seaweed).